The sequence spans 387 residues: Methylthioribose-1-phosphate isomerase (387 aa).

D257 serves as the catalytic Proton donor.

This sequence belongs to the eIF-2B alpha/beta/delta subunits family. MtnA subfamily.

Its subcellular location is the cytoplasm. It localises to the nucleus. The enzyme catalyses 5-(methylsulfanyl)-alpha-D-ribose 1-phosphate = 5-(methylsulfanyl)-D-ribulose 1-phosphate. It participates in amino-acid biosynthesis; L-methionine biosynthesis via salvage pathway; L-methionine from S-methyl-5-thio-alpha-D-ribose 1-phosphate: step 1/6. Functionally, catalyzes the interconversion of methylthioribose-1-phosphate (MTR-1-P) into methylthioribulose-1-phosphate (MTRu-1-P). This is Methylthioribose-1-phosphate isomerase (mri1) from Aspergillus fumigatus (strain CBS 144.89 / FGSC A1163 / CEA10) (Neosartorya fumigata).